A 295-amino-acid polypeptide reads, in one-letter code: N-acetylmuramic acid 6-phosphate etherase (295 aa).

One can recognise an SIS domain in the interval 54–217; the sequence is VIAAFRRGGR…STASMVGIGK (164 aa). The Proton donor role is filled by glutamate 82. Glutamate 113 is a catalytic residue.

It belongs to the GCKR-like family. MurNAc-6-P etherase subfamily. Homodimer.

The catalysed reaction is N-acetyl-D-muramate 6-phosphate + H2O = N-acetyl-D-glucosamine 6-phosphate + (R)-lactate. It participates in amino-sugar metabolism; N-acetylmuramate degradation. Functionally, specifically catalyzes the cleavage of the D-lactyl ether substituent of MurNAc 6-phosphate, producing GlcNAc 6-phosphate and D-lactate. The protein is N-acetylmuramic acid 6-phosphate etherase of Geobacillus thermodenitrificans (strain NG80-2).